Here is a 314-residue protein sequence, read N- to C-terminus: Oxidoreductase NAD-binding domain-containing protein 1 (314 aa).

A signal peptide spans 1 to 18; sequence MALVAGSAAYQVLRGVTG. Residues 63 to 166 enclose the FAD-binding FR-type domain; sequence EIISPAKVCE…VGGEFCFDPQ (104 aa). 180–185 is an NAD(+) binding site; the sequence is GVGINP.

The sequence is that of Oxidoreductase NAD-binding domain-containing protein 1 (oxnad1) from Xenopus tropicalis (Western clawed frog).